Consider the following 1091-residue polypeptide: ATPase family AAA domain-containing protein 2 (1091 aa).

The segment at 32-211 (LEDLGVFNET…HFERRRKRSR (180 aa)) is disordered. Over residues 53–62 (KQKDIQRTDE) the composition is skewed to basic and acidic residues. The segment covering 74 to 119 (SSEEGEDQEHEDDGEDEDDEDEDDDDDDDDDDDDDEDDEDEEDGEE) has biased composition (acidic residues). Lys-148 is covalently cross-linked (Glycyl lysine isopeptide (Lys-Gly) (interchain with G-Cter in SUMO2)). Residues Ser-158, Ser-168, Ser-173, and Ser-241 each carry the phosphoserine modification. 298 to 305 (GPPGTGKT) contributes to the ATP binding site. Phosphoserine is present on residues Ser-577 and Ser-582. Coiled coils occupy residues 801–825 (LTAE…IFLR) and 917–943 (YAII…KKRG). One can recognise a Bromo domain in the interval 811-923 (EQEEDTFREL…DTAYAIIKEE (113 aa)). Lys-959 participates in a covalent cross-link: Glycyl lysine isopeptide (Lys-Gly) (interchain with G-Cter in SUMO2). The disordered stretch occupies residues 961–985 (NSTLVGDKRSDPEQNEKLKTPSTPV). Basic and acidic residues predominate over residues 966 to 979 (GDKRSDPEQNEKLK). Ser-970 is subject to Phosphoserine. Lys-979 participates in a covalent cross-link: Glycyl lysine isopeptide (Lys-Gly) (interchain with G-Cter in SUMO2). A phosphothreonine mark is found at Thr-980 and Thr-983. Ser-1003 is subject to Phosphoserine. A Phosphothreonine modification is found at Thr-1024.

This sequence belongs to the AAA ATPase family. In terms of assembly, interaction with ESR1 and NCOA3 is enhanced by estradiol. Interacts with acetylated lysine residues on histone H1.4, H2A, H2B and H3 (in vitro).

Its subcellular location is the nucleus. The enzyme catalyses ATP + H2O = ADP + phosphate + H(+). In terms of biological role, may be a transcriptional coactivator of the nuclear receptor ESR1 required to induce the expression of a subset of estradiol target genes, such as CCND1, MYC and E2F1. May play a role in the recruitment or occupancy of CREBBP at some ESR1 target gene promoters. May be required for histone hyperacetylation. The chain is ATPase family AAA domain-containing protein 2 (ATAD2) from Pongo abelii (Sumatran orangutan).